The sequence spans 93 residues: Large ribosomal subunit protein uL23cz/uL23cy (93 aa).

It belongs to the universal ribosomal protein uL23 family. In terms of assembly, part of the 50S ribosomal subunit.

It is found in the plastid. Its subcellular location is the chloroplast. Its function is as follows. Binds to 23S rRNA. This Piper cenocladum (Ant piper) protein is Large ribosomal subunit protein uL23cz/uL23cy (rpl23-A).